A 102-amino-acid polypeptide reads, in one-letter code: Cytochrome b (102 aa).

A run of 3 helical transmembrane segments spans residues phenylalanine 1–methionine 21, tryptophan 45–isoleucine 66, and tryptophan 81–leucine 101. Positions 51 and 65 each coordinate heme b.

The protein belongs to the cytochrome b family. The cytochrome bc1 complex contains 3 respiratory subunits (MT-CYB, CYC1 and UQCRFS1), 2 core proteins (UQCRC1 and UQCRC2) and probably 6 low-molecular weight proteins. Heme b serves as cofactor.

Its subcellular location is the mitochondrion inner membrane. In terms of biological role, component of the ubiquinol-cytochrome c reductase complex (complex III or cytochrome b-c1 complex) that is part of the mitochondrial respiratory chain. The b-c1 complex mediates electron transfer from ubiquinol to cytochrome c. Contributes to the generation of a proton gradient across the mitochondrial membrane that is then used for ATP synthesis. The chain is Cytochrome b (mt-cyb) from Ambystoma tigrinum (Eastern tiger salamander).